We begin with the raw amino-acid sequence, 1038 residues long: Probable LRR receptor-like serine/threonine-protein kinase At1g53430 (1038 aa).

The first 28 residues, 1 to 28, serve as a signal peptide directing secretion; it reads MGFIFSTEKVVYVLLLIFVCLENFGSNA. Topologically, residues 29–609 are extracellular; sequence QLLPEDEVQT…VDTGKPLSNG (581 aa). N-linked (GlcNAc...) asparagine glycosylation is found at N48, N77, N85, N112, and N127. 6 LRR repeats span residues 113–137, 139–160, 161–184, 185–208, 210–234, and 236–256; these read LTRL…LSQI, LEIL…LGDI, TTLT…LGNL, RSLK…LSNL, NLTE…NWTL, and ERLD…ISNL. N196, N210, N231, N255, and N258 each carry an N-linked (GlcNAc...) asparagine glycan. LRR repeat units lie at residues 259 to 281, 282 to 305, 306 to 328, 330 to 351, and 352 to 374; these read LTEL…LRNL, MKMK…IGSM, SELK…TFRN, DAFN…QFII, and NSKE…SCNQ. N-linked (GlcNAc...) asparagine glycans are attached at residues N339, N363, N471, and N561. A helical transmembrane segment spans residues 610-630; it reads AVAGIVIAACAVFGLLVLVIL. At 631–1038 the chain is on the cytoplasmic side; that stretch reads RLTGYLGGKE…LDDLTDVKIE (408 aa). T658 bears the Phosphothreonine mark. Positions 669–950 constitute a Protein kinase domain; the sequence is FDPENKIGEG…EGKIKVQPPL (282 aa). ATP is bound by residues 675-683 and K697; that span reads IGEGGFGPV. Position 742 is a phosphotyrosine (Y742). The Proton acceptor role is filled by D795. S828 bears the Phosphoserine mark. Residues T829 and T834 each carry the phosphothreonine modification. Y842 is modified (phosphotyrosine). The interval 984–1038 is disordered; that stretch reads RNREQDISSSSMDGPWVDSSFSEPGKDVSLQQQEEGRSSSSSRKLLDDLTDVKIE. The segment covering 1027 to 1038 has biased composition (basic and acidic residues); the sequence is KLLDDLTDVKIE.

Belongs to the protein kinase superfamily. Ser/Thr protein kinase family.

Its subcellular location is the membrane. It catalyses the reaction L-seryl-[protein] + ATP = O-phospho-L-seryl-[protein] + ADP + H(+). The catalysed reaction is L-threonyl-[protein] + ATP = O-phospho-L-threonyl-[protein] + ADP + H(+). The polypeptide is Probable LRR receptor-like serine/threonine-protein kinase At1g53430 (Arabidopsis thaliana (Mouse-ear cress)).